Consider the following 390-residue polypeptide: Chorismate synthase 2 (390 aa).

Residues arginine 39 and arginine 45 each coordinate NADP(+). Residues 132 to 134 (RSS), 253 to 254 (NA), glycine 298, 313 to 317 (KPIPT), and arginine 339 contribute to the FMN site.

Belongs to the chorismate synthase family. In terms of assembly, homotetramer. It depends on FMNH2 as a cofactor.

It carries out the reaction 5-O-(1-carboxyvinyl)-3-phosphoshikimate = chorismate + phosphate. The protein operates within metabolic intermediate biosynthesis; chorismate biosynthesis; chorismate from D-erythrose 4-phosphate and phosphoenolpyruvate: step 7/7. Its function is as follows. Catalyzes the anti-1,4-elimination of the C-3 phosphate and the C-6 proR hydrogen from 5-enolpyruvylshikimate-3-phosphate (EPSP) to yield chorismate, which is the branch point compound that serves as the starting substrate for the three terminal pathways of aromatic amino acid biosynthesis. This reaction introduces a second double bond into the aromatic ring system. The chain is Chorismate synthase 2 from Bacillus cereus (strain ATCC 14579 / DSM 31 / CCUG 7414 / JCM 2152 / NBRC 15305 / NCIMB 9373 / NCTC 2599 / NRRL B-3711).